Consider the following 337-residue polypeptide: Interferon gamma receptor 2 (337 aa).

Residues 1 to 21 (MRPTLLWSLLLLLGVFAAAAA) form the signal peptide. Residues 28 to 247 (SQLPAPQHPK…MADASTELQQ (220 aa)) lie on the Extracellular side of the membrane. The Fibronectin type-III 1 domain occupies 31-129 (PAPQHPKIRL…GALHSAWVTM (99 aa)). Asparagine 56 and asparagine 85 each carry an N-linked (GlcNAc...) asparagine glycan. The cysteines at positions 86 and 94 are disulfide-linked. Residues asparagine 110, asparagine 137, asparagine 219, and asparagine 231 are each glycosylated (N-linked (GlcNAc...) asparagine). The 99-residue stretch at 142-240 (PPENIEVTPG…NISCYETMAD (99 aa)) folds into the Fibronectin type-III 2 domain. A disulfide bridge links cysteine 209 with cysteine 234. A helical membrane pass occupies residues 248–268 (VILISVGTFSLLSVLAGACFF). Over 269-337 (LVLKYRGLIK…KEQEDVLQTL (69 aa)) the chain is Cytoplasmic. The Dileucine internalization motif motif lies at 276-277 (LI).

It belongs to the type II cytokine receptor family. Heterodimer with IFNGR1, to form the IFNG receptor complex. Interacts (via intracellular domain) with JAK2. Expressed in T-cells (at protein level).

The protein resides in the cell membrane. It is found in the cytoplasmic vesicle membrane. Its subcellular location is the golgi apparatus membrane. The protein localises to the endoplasmic reticulum membrane. It localises to the cytoplasm. Associates with IFNGR1 to form a receptor for the cytokine interferon gamma (IFNG). Ligand binding stimulates activation of the JAK/STAT signaling pathway. Required for signal transduction in contrast to other receptor subunit responsible for ligand binding. This Homo sapiens (Human) protein is Interferon gamma receptor 2.